Consider the following 255-residue polypeptide: MAVGKNKRLSKGKKGLKKRTVDPFTRKDEYLVKAPTTFQVRDVGKTLVNRTTGLKNANDYLKGRVFEVSLADLQKDEAHSFRKVKLRVDEVQGKNCLTNFHGLDFTSDKLRSLVRKWQTLIEANVTVKTTDDYLVRLFAIAFTKRRPNQIKKTTYAQSSQIRAIRKKMTEIIQRQASSCTLTQLTKLVPEVIGREIEKSTQGIYPLQNVHIRKVKLLKSPKFDLGALLALHGEASTDDKGQKVEREFKEKVLESV.

N-acetylalanine; partial is present on alanine 2.

It belongs to the eukaryotic ribosomal protein eS1 family. In terms of assembly, component of the small ribosomal subunit. Mature ribosomes consist of a small (40S) and a large (60S) subunit. The 40S subunit contains about 33 different proteins and 1 molecule of RNA (18S). The 60S subunit contains about 49 different proteins and 3 molecules of RNA (25S, 5.8S and 5S).

The protein localises to the cytoplasm. The polypeptide is Small ribosomal subunit protein eS1 (Arthroderma otae (strain ATCC MYA-4605 / CBS 113480) (Microsporum canis)).